A 122-amino-acid chain; its full sequence is Large ribosomal subunit protein bL12 (122 aa).

This sequence belongs to the bacterial ribosomal protein bL12 family. In terms of assembly, homodimer. Part of the ribosomal stalk of the 50S ribosomal subunit. Forms a multimeric L10(L12)X complex, where L10 forms an elongated spine to which 2 to 4 L12 dimers bind in a sequential fashion. Binds GTP-bound translation factors.

Functionally, forms part of the ribosomal stalk which helps the ribosome interact with GTP-bound translation factors. Is thus essential for accurate translation. This chain is Large ribosomal subunit protein bL12, found in Vibrio parahaemolyticus serotype O3:K6 (strain RIMD 2210633).